The following is a 159-amino-acid chain: Ribosomal RNA large subunit methyltransferase H (159 aa).

Residues L76, G108, and 127-132 (FGKLTM) contribute to the S-adenosyl-L-methionine site.

It belongs to the RNA methyltransferase RlmH family. As to quaternary structure, homodimer.

It is found in the cytoplasm. The catalysed reaction is pseudouridine(1915) in 23S rRNA + S-adenosyl-L-methionine = N(3)-methylpseudouridine(1915) in 23S rRNA + S-adenosyl-L-homocysteine + H(+). Its function is as follows. Specifically methylates the pseudouridine at position 1915 (m3Psi1915) in 23S rRNA. The protein is Ribosomal RNA large subunit methyltransferase H of Lactobacillus delbrueckii subsp. bulgaricus (strain ATCC 11842 / DSM 20081 / BCRC 10696 / JCM 1002 / NBRC 13953 / NCIMB 11778 / NCTC 12712 / WDCM 00102 / Lb 14).